Reading from the N-terminus, the 105-residue chain is Cell division protein FtsB (105 aa).

Topologically, residues 1 to 3 are cytoplasmic; the sequence is MGK. The helical transmembrane segment at 4–21 threads the bilayer; sequence LTLLLLALLVWLQYSLWF. Residues 22–105 are Periplasmic-facing; the sequence is GKNGLHDYTR…QASGQQQNNR (84 aa). Positions 33–62 form a coiled coil; that stretch reads NDDVTAQQATNAKLKARNDQLFAEIDDLNG.

Belongs to the FtsB family. As to quaternary structure, part of a complex composed of FtsB, FtsL and FtsQ.

It localises to the cell inner membrane. Functionally, essential cell division protein. May link together the upstream cell division proteins, which are predominantly cytoplasmic, with the downstream cell division proteins, which are predominantly periplasmic. The chain is Cell division protein FtsB from Klebsiella aerogenes (Enterobacter aerogenes).